A 138-amino-acid chain; its full sequence is Small ribosomal subunit protein uS9c (138 aa).

It belongs to the universal ribosomal protein uS9 family.

It is found in the plastid. It localises to the chloroplast. The polypeptide is Small ribosomal subunit protein uS9c (rps9) (Trieres chinensis (Marine centric diatom)).